Here is a 502-residue protein sequence, read N- to C-terminus: Maturase K (502 aa).

It belongs to the intron maturase 2 family. MatK subfamily.

Its subcellular location is the plastid. It is found in the chloroplast. Its function is as follows. Usually encoded in the trnK tRNA gene intron. Probably assists in splicing its own and other chloroplast group II introns. The polypeptide is Maturase K (Ehretia anacua (Sandpaper tree)).